The sequence spans 95 residues: uncharacterized protein (95 aa).

This is an uncharacterized protein from Escherichia coli (strain K12).